The chain runs to 240 residues: 1-(5-phosphoribosyl)-5-[(5-phosphoribosylamino)methylideneamino] imidazole-4-carboxamide isomerase (240 aa).

D8 serves as the catalytic Proton acceptor. D129 serves as the catalytic Proton donor.

It belongs to the HisA/HisF family.

The protein localises to the cytoplasm. The catalysed reaction is 1-(5-phospho-beta-D-ribosyl)-5-[(5-phospho-beta-D-ribosylamino)methylideneamino]imidazole-4-carboxamide = 5-[(5-phospho-1-deoxy-D-ribulos-1-ylimino)methylamino]-1-(5-phospho-beta-D-ribosyl)imidazole-4-carboxamide. The protein operates within amino-acid biosynthesis; L-histidine biosynthesis; L-histidine from 5-phospho-alpha-D-ribose 1-diphosphate: step 4/9. The protein is 1-(5-phosphoribosyl)-5-[(5-phosphoribosylamino)methylideneamino] imidazole-4-carboxamide isomerase of Caldanaerobacter subterraneus subsp. tengcongensis (strain DSM 15242 / JCM 11007 / NBRC 100824 / MB4) (Thermoanaerobacter tengcongensis).